A 435-amino-acid polypeptide reads, in one-letter code: Glutamyl-tRNA reductase (435 aa).

Substrate-binding positions include 49-52 (TCNR), Ser109, 114-116 (ETQ), and Gln120. Cys50 serves as the catalytic Nucleophile. Residue 189-194 (GAGEMS) participates in NADP(+) binding.

The protein belongs to the glutamyl-tRNA reductase family. As to quaternary structure, homodimer.

The enzyme catalyses (S)-4-amino-5-oxopentanoate + tRNA(Glu) + NADP(+) = L-glutamyl-tRNA(Glu) + NADPH + H(+). Its pathway is porphyrin-containing compound metabolism; protoporphyrin-IX biosynthesis; 5-aminolevulinate from L-glutamyl-tRNA(Glu): step 1/2. In terms of biological role, catalyzes the NADPH-dependent reduction of glutamyl-tRNA(Glu) to glutamate 1-semialdehyde (GSA). This Listeria innocua serovar 6a (strain ATCC BAA-680 / CLIP 11262) protein is Glutamyl-tRNA reductase.